A 141-amino-acid polypeptide reads, in one-letter code: Large ribosomal subunit protein uL16 (141 aa).

Residues 1-23 (MLMPKRTKYRKQMKGRNRGKAHR) form a disordered region.

The protein belongs to the universal ribosomal protein uL16 family. In terms of assembly, part of the 50S ribosomal subunit.

Binds 23S rRNA and is also seen to make contacts with the A and possibly P site tRNAs. The chain is Large ribosomal subunit protein uL16 from Helicobacter pylori (strain J99 / ATCC 700824) (Campylobacter pylori J99).